The chain runs to 132 residues: Small ribosomal subunit protein uS8 (132 aa).

It belongs to the universal ribosomal protein uS8 family. In terms of assembly, part of the 30S ribosomal subunit. Contacts proteins S5 and S12.

One of the primary rRNA binding proteins, it binds directly to 16S rRNA central domain where it helps coordinate assembly of the platform of the 30S subunit. In Corynebacterium efficiens (strain DSM 44549 / YS-314 / AJ 12310 / JCM 11189 / NBRC 100395), this protein is Small ribosomal subunit protein uS8.